The primary structure comprises 89 residues: UPF0223 protein BCA_4066 (89 aa).

Belongs to the UPF0223 family.

This Bacillus cereus (strain 03BB102) protein is UPF0223 protein BCA_4066.